The following is a 347-amino-acid chain: Heme A synthase (347 aa).

8 consecutive transmembrane segments (helical) span residues 14-34 (VKIW…IGGI), 96-116 (FHRL…LYFM), 129-149 (FILI…MVKS), 162-182 (LAMH…HFLL), 199-219 (VFYI…LVAG), 260-280 (FIHE…LLVL), 287-307 (MYLL…TFIY), and 311-331 (IILA…SIYL). H262 contributes to the heme binding site. Residue H317 coordinates heme.

This sequence belongs to the COX15/CtaA family. Type 2 subfamily. As to quaternary structure, interacts with CtaB. It depends on heme b as a cofactor.

Its subcellular location is the cell membrane. The enzyme catalyses Fe(II)-heme o + 2 A + H2O = Fe(II)-heme a + 2 AH2. The protein operates within porphyrin-containing compound metabolism; heme A biosynthesis; heme A from heme O: step 1/1. Functionally, catalyzes the conversion of heme O to heme A by two successive hydroxylations of the methyl group at C8. The first hydroxylation forms heme I, the second hydroxylation results in an unstable dihydroxymethyl group, which spontaneously dehydrates, resulting in the formyl group of heme A. This chain is Heme A synthase, found in Ehrlichia ruminantium (strain Welgevonden).